The following is a 321-amino-acid chain: Ribose-phosphate pyrophosphokinase (321 aa).

Residues D39–E41 and R98–Q99 contribute to the ATP site. Mg(2+)-binding residues include H132 and D170. The active site involves K195. Residues R197, D221, and D225–T229 each bind D-ribose 5-phosphate.

This sequence belongs to the ribose-phosphate pyrophosphokinase family. Class I subfamily. Homohexamer. Requires Mg(2+) as cofactor.

It localises to the cytoplasm. The enzyme catalyses D-ribose 5-phosphate + ATP = 5-phospho-alpha-D-ribose 1-diphosphate + AMP + H(+). Its pathway is metabolic intermediate biosynthesis; 5-phospho-alpha-D-ribose 1-diphosphate biosynthesis; 5-phospho-alpha-D-ribose 1-diphosphate from D-ribose 5-phosphate (route I): step 1/1. In terms of biological role, involved in the biosynthesis of the central metabolite phospho-alpha-D-ribosyl-1-pyrophosphate (PRPP) via the transfer of pyrophosphoryl group from ATP to 1-hydroxyl of ribose-5-phosphate (Rib-5-P). In Mycoplasmopsis pulmonis (strain UAB CTIP) (Mycoplasma pulmonis), this protein is Ribose-phosphate pyrophosphokinase.